Reading from the N-terminus, the 534-residue chain is MTKQILYQENARKALEKGIDILAEAVSVTLGPKGRNVVIEKKYGPPQIINDGVTIAKEIELEDHIENTGVALIRQAASKTNDVAGDGTTTSTVLAHAIVKQGMRNVAAGANPIALKRGIDKATQFIINKISEYSRPVEDNKAITQVATISSGNDENIGKMIADAIEKVGREGVISIEEGKSTTTELEIKEGMKFERGYISPYFVTDSDRMEVVQENASVLITDKKITLVQQDLLPVLEQIAKTNKPLLIIAEDIEKEALATLIVNKLRGILNVVAVKAPGFGDRRKSILEDIAILTGGQLITEDAGLSLDKVDLSMLGQANKVIVNKESTTIISNANENNVKARCEQIRKQIEITDSSYEKEKLQERLAKLAGGIAVIKVGAATETEMKDKKLRLEDAINATKAAIEEGIVPGGGATLVHLANDLFNWAKGVLKEDELIGALIVEKSITAPLKRIVQNEGKNGAIVVDEIKNLDFSIGYDASTSKFVNMYESGIIDPAKVTRSALQNASSIAGMILTTECLVVDEMNRNMEVRK.

Residues 29–32 (TLGP), 86–90 (DGTTT), G414, and D496 contribute to the ATP site.

The protein belongs to the chaperonin (HSP60) family. Forms a cylinder of 14 subunits composed of two heptameric rings stacked back-to-back. Interacts with the co-chaperonin GroES.

It localises to the plastid. Its subcellular location is the chloroplast. The catalysed reaction is ATP + H2O + a folded polypeptide = ADP + phosphate + an unfolded polypeptide.. Together with its co-chaperonin GroES, plays an essential role in assisting protein folding. The GroEL-GroES system forms a nano-cage that allows encapsulation of the non-native substrate proteins and provides a physical environment optimized to promote and accelerate protein folding. The chain is Chaperonin GroEL, chloroplastic from Galdieria sulphuraria (Red alga).